Reading from the N-terminus, the 843-residue chain is Aconitase AMT8-2 (843 aa).

258–260 contributes to the substrate binding site; that stretch reads DSH. Residues cysteine 450, cysteine 513, and cysteine 516 each contribute to the [4Fe-4S] cluster site. Residues arginine 536, arginine 541, and 712 to 713 each bind substrate; that span reads SR.

Belongs to the aconitase/IPM isomerase family.

The protein operates within mycotoxin biosynthesis. In terms of biological role, aconitase; part of the gene clusters that mediate the biosynthesis of AM-toxins, host-selective toxins (HSTs) causing Alternaria blotch on apple, a worldwide distributed disease. AM-toxins are cyclic depsipeptides containing the 3 residues 2-hydroxy-isovaleric acid (2-HIV), dehydroalanine, L-alanine which are common for all 3 AM-toxins I to III. The fourth precursor is L-alpha-amino-methoxyphenyl-valeric acid (L-Amv) for AM-toxin I, L-alpha-amino-phenyl-valeric acid (L-Apv) for AM-toxin II, and L-alpha-amino-hydroxyphenyl-valeric acid (L-Ahv) for AM-toxin III. AM-toxins have two target sites for affecting susceptible apple cells; they cause invagination of the plasma membrane and electrolyte loss and chloroplast disorganization. The non-ribosomal peptide synthetase AMT1 contains 4 catalytic modules and is responsible for activation of each residue in AM-toxin. The aldo-keto reductase AMT2 catalyzes the conversion of 2-keto-isovaleric acid (2-KIV) to 2-hydroxy-isovaleric acid (2-HIV), one of the precursor residues incorporated by AMT1 during AM-toxin biosynthesis, by reduction of its ketone to an alcohol. The cytochrome P450 monooxygenase AMT3 and the thioesterase AMT4 are also important for AM-toxin production, but their exact function within the AM-toxin biosynthesis are not known yet. Up to 21 proteins (including AMT1 to AMT4) are predicted to be involved in AM-toxin biosynthesis since their expression ishighly up-regulated in AM-toxin-producing cultures. This Alternaria alternata (Alternaria rot fungus) protein is Aconitase AMT8-2.